A 38-amino-acid chain; its full sequence is Photosystem II reaction center protein L (38 aa).

A helical transmembrane segment spans residues 17 to 37 (SLYWGLLLIFVLAVLFSSYIF).

The protein belongs to the PsbL family. As to quaternary structure, PSII is composed of 1 copy each of membrane proteins PsbA, PsbB, PsbC, PsbD, PsbE, PsbF, PsbH, PsbI, PsbJ, PsbK, PsbL, PsbM, PsbT, PsbX, PsbY, PsbZ, Psb30/Ycf12, at least 3 peripheral proteins of the oxygen-evolving complex and a large number of cofactors. It forms dimeric complexes.

The protein localises to the plastid. Its subcellular location is the chloroplast thylakoid membrane. One of the components of the core complex of photosystem II (PSII). PSII is a light-driven water:plastoquinone oxidoreductase that uses light energy to abstract electrons from H(2)O, generating O(2) and a proton gradient subsequently used for ATP formation. It consists of a core antenna complex that captures photons, and an electron transfer chain that converts photonic excitation into a charge separation. This subunit is found at the monomer-monomer interface and is required for correct PSII assembly and/or dimerization. This chain is Photosystem II reaction center protein L, found in Ostreococcus tauri.